We begin with the raw amino-acid sequence, 347 residues long: Chaperone protein DnaJ 1 (347 aa).

Positions Asp-5–Ala-75 constitute a J domain. The segment covering Ala-68–Asp-77 has biased composition (low complexity). The tract at residues Ala-68–Ala-91 is disordered. The CR-type zinc finger occupies Gly-107 to Ala-181. 8 residues coordinate Zn(2+): Cys-120, Cys-123, Cys-137, Cys-140, Cys-155, Cys-158, Cys-169, and Cys-172. 4 CXXCXGXG motif repeats span residues Cys-120–Gly-127, Cys-137–Gly-144, Cys-155–Gly-162, and Cys-169–Gly-176.

The protein belongs to the DnaJ family. In terms of assembly, homodimer. Requires Zn(2+) as cofactor.

The protein resides in the cytoplasm. Participates actively in the response to hyperosmotic and heat shock by preventing the aggregation of stress-denatured proteins and by disaggregating proteins, also in an autonomous, DnaK-independent fashion. Unfolded proteins bind initially to DnaJ; upon interaction with the DnaJ-bound protein, DnaK hydrolyzes its bound ATP, resulting in the formation of a stable complex. GrpE releases ADP from DnaK; ATP binding to DnaK triggers the release of the substrate protein, thus completing the reaction cycle. Several rounds of ATP-dependent interactions between DnaJ, DnaK and GrpE are required for fully efficient folding. Also involved, together with DnaK and GrpE, in the DNA replication of plasmids through activation of initiation proteins. The polypeptide is Chaperone protein DnaJ 1 (Aromatoleum aromaticum (strain DSM 19018 / LMG 30748 / EbN1) (Azoarcus sp. (strain EbN1))).